The chain runs to 323 residues: HPr kinase/phosphorylase (323 aa).

Active-site residues include H146 and K167. Residue 161–168 coordinates ATP; it reads GESGLGKS. Mg(2+) is bound at residue S168. D185 acts as the Proton acceptor; for phosphorylation activity. Proton donor; for dephosphorylation activity in catalysis. The important for the catalytic mechanism of both phosphorylation and dephosphorylation stretch occupies residues 209-218; it reads LEVRGLGLLD. Position 210 (E210) interacts with Mg(2+). The active site involves R250. Residues 271–276 form an important for the catalytic mechanism of dephosphorylation region; the sequence is QVAAGR.

Belongs to the HPrK/P family. Homohexamer. Mg(2+) is required as a cofactor.

It carries out the reaction [HPr protein]-L-serine + ATP = [HPr protein]-O-phospho-L-serine + ADP + H(+). The catalysed reaction is [HPr protein]-O-phospho-L-serine + phosphate + H(+) = [HPr protein]-L-serine + diphosphate. Catalyzes the ATP- as well as the pyrophosphate-dependent phosphorylation of a specific serine residue in HPr, a phosphocarrier protein of the phosphoenolpyruvate-dependent sugar phosphotransferase system (PTS). HprK/P also catalyzes the pyrophosphate-producing, inorganic phosphate-dependent dephosphorylation (phosphorolysis) of seryl-phosphorylated HPr (P-Ser-HPr). The protein is HPr kinase/phosphorylase of Cupriavidus necator (strain ATCC 17699 / DSM 428 / KCTC 22496 / NCIMB 10442 / H16 / Stanier 337) (Ralstonia eutropha).